The chain runs to 143 residues: Large ribosomal subunit protein uL15 (143 aa).

Residues Met-1–Arg-59 are disordered. The segment covering Arg-21–Ala-31 has biased composition (gly residues).

Belongs to the universal ribosomal protein uL15 family. In terms of assembly, part of the 50S ribosomal subunit.

Binds to the 23S rRNA. This is Large ribosomal subunit protein uL15 from Albidiferax ferrireducens (strain ATCC BAA-621 / DSM 15236 / T118) (Rhodoferax ferrireducens).